The primary structure comprises 200 residues: Holliday junction branch migration complex subunit RuvA (200 aa).

Positions 1-64 (MIGRIVGTLI…EDSHTLYGFI (64 aa)) are domain I. The domain II stretch occupies residues 65-143 (DKNERALFRV…QAAKTDLFSA (79 aa)). The interval 144–149 (PAVLRQ) is flexible linker. The segment at 150–200 (VQADPRQEAEAALISLGYKPQEAAKAIAGVPVDAANSEDVIKAALKGMLRK) is domain III.

The protein belongs to the RuvA family. As to quaternary structure, homotetramer. Forms an RuvA(8)-RuvB(12)-Holliday junction (HJ) complex. HJ DNA is sandwiched between 2 RuvA tetramers; dsDNA enters through RuvA and exits via RuvB. An RuvB hexamer assembles on each DNA strand where it exits the tetramer. Each RuvB hexamer is contacted by two RuvA subunits (via domain III) on 2 adjacent RuvB subunits; this complex drives branch migration. In the full resolvosome a probable DNA-RuvA(4)-RuvB(12)-RuvC(2) complex forms which resolves the HJ.

The protein localises to the cytoplasm. The RuvA-RuvB-RuvC complex processes Holliday junction (HJ) DNA during genetic recombination and DNA repair, while the RuvA-RuvB complex plays an important role in the rescue of blocked DNA replication forks via replication fork reversal (RFR). RuvA specifically binds to HJ cruciform DNA, conferring on it an open structure. The RuvB hexamer acts as an ATP-dependent pump, pulling dsDNA into and through the RuvAB complex. HJ branch migration allows RuvC to scan DNA until it finds its consensus sequence, where it cleaves and resolves the cruciform DNA. The chain is Holliday junction branch migration complex subunit RuvA from Marinomonas sp. (strain MWYL1).